The following is a 47-amino-acid chain: Large ribosomal subunit protein bL33 (47 aa).

This sequence belongs to the bacterial ribosomal protein bL33 family.

This Staphylococcus saprophyticus protein is Large ribosomal subunit protein bL33.